A 315-amino-acid chain; its full sequence is 4-hydroxy-3-methylbut-2-enyl diphosphate reductase (315 aa).

Cys-12 lines the [4Fe-4S] cluster pocket. (2E)-4-hydroxy-3-methylbut-2-enyl diphosphate contacts are provided by His-41 and His-74. Dimethylallyl diphosphate is bound by residues His-41 and His-74. Residues His-41 and His-74 each contribute to the isopentenyl diphosphate site. Residue Cys-96 coordinates [4Fe-4S] cluster. His-124 lines the (2E)-4-hydroxy-3-methylbut-2-enyl diphosphate pocket. His-124 lines the dimethylallyl diphosphate pocket. Isopentenyl diphosphate is bound at residue His-124. The active-site Proton donor is Glu-126. Thr-168 is a (2E)-4-hydroxy-3-methylbut-2-enyl diphosphate binding site. [4Fe-4S] cluster is bound at residue Cys-198. Ser-226, Ser-227, Asn-228, and Ser-270 together coordinate (2E)-4-hydroxy-3-methylbut-2-enyl diphosphate. The dimethylallyl diphosphate site is built by Ser-226, Ser-227, Asn-228, and Ser-270. The isopentenyl diphosphate site is built by Ser-226, Ser-227, Asn-228, and Ser-270.

It belongs to the IspH family. The cofactor is [4Fe-4S] cluster.

It catalyses the reaction isopentenyl diphosphate + 2 oxidized [2Fe-2S]-[ferredoxin] + H2O = (2E)-4-hydroxy-3-methylbut-2-enyl diphosphate + 2 reduced [2Fe-2S]-[ferredoxin] + 2 H(+). It carries out the reaction dimethylallyl diphosphate + 2 oxidized [2Fe-2S]-[ferredoxin] + H2O = (2E)-4-hydroxy-3-methylbut-2-enyl diphosphate + 2 reduced [2Fe-2S]-[ferredoxin] + 2 H(+). Its pathway is isoprenoid biosynthesis; dimethylallyl diphosphate biosynthesis; dimethylallyl diphosphate from (2E)-4-hydroxy-3-methylbutenyl diphosphate: step 1/1. It functions in the pathway isoprenoid biosynthesis; isopentenyl diphosphate biosynthesis via DXP pathway; isopentenyl diphosphate from 1-deoxy-D-xylulose 5-phosphate: step 6/6. Functionally, catalyzes the conversion of 1-hydroxy-2-methyl-2-(E)-butenyl 4-diphosphate (HMBPP) into a mixture of isopentenyl diphosphate (IPP) and dimethylallyl diphosphate (DMAPP). Acts in the terminal step of the DOXP/MEP pathway for isoprenoid precursor biosynthesis. In Pseudomonas putida (strain W619), this protein is 4-hydroxy-3-methylbut-2-enyl diphosphate reductase.